The following is a 287-amino-acid chain: MRLIVVSGHSGAGKSVALRVLEDMGYYCVDNLPVNLLESFIQSVSESKQNVAVSIDVRNIPKKLKELTTTLQKLKSSIDLSILFLDADKATLLKRYSETRRVHPLSLSDECHTLDQAIDLEKKMLKPLKEIADILLNSSNQSLHDLSEDVRYRIEGKERNKLIMVFESFGFKFGLPTDADYVFDVRFLPNPHWEPALRPMTGLDAPIKTFLESHDEVLELKRQIQTFIEHWLPLLEKNNRSYLTVAIGCTGGKHRSVYLTQQIGEYFAAMGHTVKIRHTTLEKRNKE.

8–15 is a binding site for ATP; that stretch reads GHSGAGKS. GTP is bound at residue 56-59; the sequence is DVRN.

The protein belongs to the RapZ-like family.

In terms of biological role, displays ATPase and GTPase activities. This chain is Nucleotide-binding protein VV0445, found in Vibrio vulnificus (strain YJ016).